A 392-amino-acid polypeptide reads, in one-letter code: 5-azacytidine-induced protein 2 (392 aa).

The tract at residues 1–197 is homodimerization; the sequence is MDALVEDDIC…IELQKAKQTD (197 aa). Coiled coils occupy residues 40–76 and 102–196; these read ALVTAYEDIKKRLKDSEKENSLLKKRIRFLEEKLIAR and DRDN…AKQT. The segment at 216 to 257 is interaction with TBK1 and IKBKE; it reads SDNMQHAYWELKREMSNLHLVTQVQAELLRKLKTSTAIKKAC. Phosphoserine occurs at positions 318 and 353.

In terms of assembly, homodimer. Interacts with IKBKE. Interacts with TBK1. Interacts with TICAM1. Interacts with TAX1BP1. Interacts with CALCOCO2. (Microbial infection) Interacts with vaccinia virus protein C6. Post-translationally, ubiquitinated via 'Lys-48'-linked polyubiquitination by TRIM38, leading to its degradation. As to expression, widely expressed. Abundant expression seen in the pancreas and testis.

It localises to the cytoplasm. In terms of biological role, adapter protein which binds TBK1 and IKBKE playing a role in antiviral innate immunity. Activates serine/threonine-protein kinase TBK1 and facilitates its oligomerization. Enhances the phosphorylation of NF-kappa-B p65 subunit RELA by TBK1. Promotes TBK1-induced as well as TNF-alpha or PMA-induced activation of NF-kappa-B. Participates in IFNB promoter activation via TICAM1. In Homo sapiens (Human), this protein is 5-azacytidine-induced protein 2 (AZI2).